A 126-amino-acid polypeptide reads, in one-letter code: Aspartate 1-decarboxylase (126 aa).

Serine 25 (schiff-base intermediate with substrate; via pyruvic acid) is an active-site residue. Serine 25 carries the post-translational modification Pyruvic acid (Ser). A substrate-binding site is contributed by threonine 57. Tyrosine 58 serves as the catalytic Proton donor. Residue 73 to 75 (GGA) coordinates substrate.

This sequence belongs to the PanD family. Heterooctamer of four alpha and four beta subunits. Pyruvate is required as a cofactor. In terms of processing, is synthesized initially as an inactive proenzyme, which is activated by self-cleavage at a specific serine bond to produce a beta-subunit with a hydroxyl group at its C-terminus and an alpha-subunit with a pyruvoyl group at its N-terminus.

Its subcellular location is the cytoplasm. The enzyme catalyses L-aspartate + H(+) = beta-alanine + CO2. It functions in the pathway cofactor biosynthesis; (R)-pantothenate biosynthesis; beta-alanine from L-aspartate: step 1/1. Catalyzes the pyruvoyl-dependent decarboxylation of aspartate to produce beta-alanine. This is Aspartate 1-decarboxylase from Xanthomonas campestris pv. campestris (strain ATCC 33913 / DSM 3586 / NCPPB 528 / LMG 568 / P 25).